The chain runs to 144 residues: ATP synthase epsilon chain (144 aa).

The protein belongs to the ATPase epsilon chain family. F-type ATPases have 2 components, CF(1) - the catalytic core - and CF(0) - the membrane proton channel. CF(1) has five subunits: alpha(3), beta(3), gamma(1), delta(1), epsilon(1). CF(0) has three main subunits: a, b and c.

The protein localises to the cell inner membrane. Its function is as follows. Produces ATP from ADP in the presence of a proton gradient across the membrane. In Hydrogenovibrio crunogenus (strain DSM 25203 / XCL-2) (Thiomicrospira crunogena), this protein is ATP synthase epsilon chain.